A 234-amino-acid chain; its full sequence is uncharacterized protein (234 aa).

Residues V24–T83 enclose the HTH tetR-type domain. A DNA-binding region (H-T-H motif) is located at residues S46–F65.

This is an uncharacterized protein from Mycobacterium tuberculosis (strain CDC 1551 / Oshkosh).